A 379-amino-acid polypeptide reads, in one-letter code: Cytochrome b (379 aa).

A run of 4 helical transmembrane segments spans residues 34 to 54, 78 to 99, 114 to 134, and 179 to 199; these read YGSL…FLSM, WLLR…YLHA, WNIG…GYVL, and FFAF…LHIM. His-84 and His-98 together coordinate heme b. Residues His-183 and His-197 each coordinate heme b. His-202 is an a ubiquinone binding site. 4 consecutive transmembrane segments (helical) span residues 227–247, 289–309, 321–341, and 349–369; these read IKDT…VLFE, LGGV…PLTS, LNKT…WIGG, and IIIG…SPTI.

It belongs to the cytochrome b family. In terms of assembly, the main subunits of complex b-c1 are: cytochrome b, cytochrome c1 and the Rieske protein. Heme b is required as a cofactor.

Its subcellular location is the mitochondrion inner membrane. Component of the ubiquinol-cytochrome c reductase complex (complex III or cytochrome b-c1 complex) that is part of the mitochondrial respiratory chain. The b-c1 complex mediates electron transfer from ubiquinol to cytochrome c. Contributes to the generation of a proton gradient across the mitochondrial membrane that is then used for ATP synthesis. In Lumbricus terrestris (Common earthworm), this protein is Cytochrome b (MT-CYB).